Reading from the N-terminus, the 230-residue chain is PKHD-type hydroxylase Xfasm12_1709 (230 aa).

The 105-residue stretch at 78–182 (RTLPPRFNRY…RIASFFWVQS (105 aa)) folds into the Fe2OG dioxygenase domain. Fe cation contacts are provided by His-96, Asp-98, and His-163. Arg-173 serves as a coordination point for 2-oxoglutarate.

The cofactor is Fe(2+). L-ascorbate serves as cofactor.

In Xylella fastidiosa (strain M12), this protein is PKHD-type hydroxylase Xfasm12_1709.